We begin with the raw amino-acid sequence, 419 residues long: Innexin-2 (419 aa).

A run of 4 helical transmembrane segments spans residues 33-53 (AWFTPFVLVAMTLAISCKQYF), 108-128 (PLVLLFQAAMFVLPYHLWNLF), 184-204 (INYFLLKLGFIVNCILQMVLL), and 270-290 (LYICFYFWLIFVFVVTTAGMI).

This sequence belongs to the pannexin family.

Its subcellular location is the cell membrane. It is found in the cell junction. The protein localises to the gap junction. Structural component of the gap junctions. In Caenorhabditis elegans, this protein is Innexin-2 (inx-2).